The primary structure comprises 877 residues: Putative ankyrin repeat protein R748 (877 aa).

6 ANK repeats span residues 44 to 74 (IRHI…TINV), 79 to 109 (QNNT…NINY), 115 to 145 (IGIS…AIQQ), 202 to 231 (MGYR…SINE), 243 to 272 (NNND…PIHM), and 282 to 311 (LVPT…SIQA). The disordered stretch occupies residues 525-579 (DSDEDPVCDSNESDNSNDINNHVKSDNKLNSSNDYYDEDDSEDNYNNQSDDEPLV). A compositionally biased stretch (low complexity) spans 533-544 (DSNESDNSNDIN).

This is Putative ankyrin repeat protein R748 from Acanthamoeba polyphaga mimivirus (APMV).